The chain runs to 218 residues: GTP cyclohydrolase 1 (218 aa).

Positions 111, 114, and 182 each coordinate Zn(2+).

This sequence belongs to the GTP cyclohydrolase I family. Toroid-shaped homodecamer, composed of two pentamers of five dimers.

The enzyme catalyses GTP + H2O = 7,8-dihydroneopterin 3'-triphosphate + formate + H(+). It participates in cofactor biosynthesis; 7,8-dihydroneopterin triphosphate biosynthesis; 7,8-dihydroneopterin triphosphate from GTP: step 1/1. The protein is GTP cyclohydrolase 1 of Buchnera aphidicola subsp. Schizaphis graminum (strain Sg).